We begin with the raw amino-acid sequence, 621 residues long: Phytoene desaturase (621 aa).

An N-terminal signal peptide occupies residues 1–23 (MPSTSKRPTAIVIGSGVGGVSTA). The interval 394–425 (HASQAHQLSASRNGHISSASPPDQPGLTPTEK) is disordered. A compositionally biased stretch (polar residues) spans 397-414 (QAHQLSASRNGHISSASP). Residues 598-618 (WEQWVSVLIYLLVGIFAWLWM) traverse the membrane as a helical segment.

This sequence belongs to the carotenoid/retinoid oxidoreductase family. It depends on NAD(+) as a cofactor.

Its subcellular location is the membrane. The enzyme catalyses 15-cis-phytoene + 5 A = all-trans-3,4-didehydrolycopene + 5 AH2. The protein operates within carotenoid biosynthesis; lycopene biosynthesis. Phytoene desaturase involved in the carotenoid biosynthesis pathway. Converts phytoene into 3,4-didehydrolycopene via the intermediary of phytofluene, zeta-carotene, neurosporene and lycopene, by introducing up to five double bonds into phytoene. This chain is Phytoene desaturase (PDH1), found in Cercospora nicotianae (Barn spot disease fungus).